We begin with the raw amino-acid sequence, 276 residues long: UPF0276 protein PA4106 (276 aa).

The protein belongs to the UPF0276 family.

In Pseudomonas aeruginosa (strain ATCC 15692 / DSM 22644 / CIP 104116 / JCM 14847 / LMG 12228 / 1C / PRS 101 / PAO1), this protein is UPF0276 protein PA4106.